A 449-amino-acid chain; its full sequence is Glucose-6-phosphate isomerase (449 aa).

T38 is subject to Phosphothreonine. E290 serves as the catalytic Proton donor. Active-site residues include H311 and K425.

Belongs to the GPI family.

The protein localises to the cytoplasm. The catalysed reaction is alpha-D-glucose 6-phosphate = beta-D-fructose 6-phosphate. Its pathway is carbohydrate biosynthesis; gluconeogenesis. It participates in carbohydrate degradation; glycolysis; D-glyceraldehyde 3-phosphate and glycerone phosphate from D-glucose: step 2/4. In terms of biological role, catalyzes the reversible isomerization of glucose-6-phosphate to fructose-6-phosphate. The polypeptide is Glucose-6-phosphate isomerase (Geobacillus thermodenitrificans (strain NG80-2)).